Here is a 378-residue protein sequence, read N- to C-terminus: Circumsporozoite protein (378 aa).

An N-terminal signal peptide occupies residues 1–22 (MKNFNLLVVSSILLVDLFPTNC). Residues 50–288 (AQVRQSASRG…AGAGQGQNNE (239 aa)) are disordered. Residues 65 to 93 (NPKDEEGADKPKKKEEKKVEPKKPRENKL) are compositionally biased toward basic and acidic residues. The tract at residues 81–89 (KKVEPKKPR) is required for the binding to heparan sulfate proteoglycans (HSPGs) on the surface of host hepatocytes. The tract at residues 92-96 (KLKQP) is region I; contains the proteolytic cleavage site. Positions 96-203 (PPAGDGAPEG…RAGGQPAAGG (108 aa)) are enriched in low complexity. A 1-1; truncated repeat occupies 97 to 102 (PAGDGA). The interval 97–191 (PAGDGAPEGD…AAPAGDGAPA (95 aa)) is 11 X 9 AA tandem repeats of P-[AE]-G-D-G-A-P-A-[AG]. 13 repeat units span residues 103 to 111 (PEGDGAPAA), 112 to 120 (PAGDGAPAA), 121 to 129 (PAGDGAPAA), 130 to 138 (PAGDGAPAA), 139 to 147 (PAGDGAPAA), 148 to 156 (PAGDGAPAA), 157 to 165 (PAGDGAPAA), 166 to 174 (PAGDGAPAA), 175 to 183 (PAGDGAPAA), 184 to 191 (PAGDGAPA), 193 to 208 (NRAG…QAGG), 209 to 224 (NRAG…QAGG), and 225 to 240 (NRAG…QAGG). The interval 193-268 (NRAGGQPAAG…GAQAGGANAG (76 aa)) is 6 X 16 AA approximate tandem repeats of N-R-A-G-G-Q-P-A-A-G-G-N-Q-A-G-G. A compositionally biased stretch (low complexity) spans 228-251 (GGQPAAGGNQAGGQPAAGGNQAGA). The stretch at 241–251 (QPAAGGNQAGA) is one 2-4; approximate; truncated repeat. The stretch at 252-260 (QAGGNQAGA) is one 2-5; approximate; truncated repeat. Composition is skewed to gly residues over residues 252-266 (QAGG…GGAN) and 274-283 (EAGGNAGAGQ). The 2-6; approximate; truncated repeat unit spans residues 261 to 268 (QAGGANAG). Positions 304–356 (KIRSTLGVEWSPCSVTCGKGVRMRRKVSAANKKPEELDVNDLETEVCTMDKCA) constitute a TSP type-1 domain. 2 disulfides stabilise this stretch: C316–C350 and C320–C355. The O-linked (Fuc) threonine glycan is linked to T319. C355 carries GPI-anchor amidated cysteine lipidation. The propeptide at 356–378 (AGIFNVVSNSLRLVILLVLALFN) is removed in mature form.

The protein belongs to the plasmodium circumsporozoite protein family. Post-translationally, during host cell invasion, proteolytically cleaved at the cell membrane in the region I by a papain-like cysteine protease of parasite origin. Cleavage is triggered by the sporozoite contact with highly sulfated heparan sulfate proteoglycans (HSPGs) present on the host hepatocyte cell surface. Cleavage exposes the TSP type-1 (TSR) domain and is required for productive invasion of host hepatocytes but not for adhesion to the host cell membrane. Cleavage is dispensable for sporozoite development in the oocyst, motility and for traversal of host and vector cells. O-glycosylated; maybe by POFUT2.

Its subcellular location is the cell membrane. The protein resides in the cytoplasm. Functionally, essential sporozoite protein. In the mosquito vector, required for sporozoite development in the oocyst, migration through the vector hemolymph and entry into the vector salivary glands. In the vertebrate host, required for sporozoite migration through the host dermis and infection of host hepatocytes. Binds to highly sulfated heparan sulfate proteoglycans (HSPGs) on the surface of host hepatocytes. In terms of biological role, in the vertebrate host, binds to highly sulfated heparan sulfate proteoglycans (HSPGs) on the surface of host hepatocytes and is required for sporozoite invasion of the host hepatocytes. This Plasmodium cynomolgi (strain Berok) protein is Circumsporozoite protein.